A 122-amino-acid chain; its full sequence is Large ribosomal subunit protein uL14 (122 aa).

It belongs to the universal ribosomal protein uL14 family. In terms of assembly, part of the 50S ribosomal subunit. Forms a cluster with proteins L3 and L19. In the 70S ribosome, L14 and L19 interact and together make contacts with the 16S rRNA in bridges B5 and B8.

Binds to 23S rRNA. Forms part of two intersubunit bridges in the 70S ribosome. The polypeptide is Large ribosomal subunit protein uL14 (Streptomyces coelicolor (strain ATCC BAA-471 / A3(2) / M145)).